The primary structure comprises 247 residues: tRNA uridine(34) hydroxylase (247 aa).

The Rhodanese domain maps to 124-218 (TQQDVIVIDT…YLEDTQNKNN (95 aa)). The active-site Cysteine persulfide intermediate is Cys-178.

Belongs to the TrhO family.

It carries out the reaction uridine(34) in tRNA + AH2 + O2 = 5-hydroxyuridine(34) in tRNA + A + H2O. Functionally, catalyzes oxygen-dependent 5-hydroxyuridine (ho5U) modification at position 34 in tRNAs. This Rickettsia conorii (strain ATCC VR-613 / Malish 7) protein is tRNA uridine(34) hydroxylase.